The chain runs to 323 residues: Lipoyl synthase (323 aa).

The [4Fe-4S] cluster site is built by Cys61, Cys66, Cys72, Cys87, Cys91, Cys94, and Ser300. The Radical SAM core domain maps to 73 to 289; the sequence is WDKKHATFMI…ETVAYTKGFL (217 aa).

The protein belongs to the radical SAM superfamily. Lipoyl synthase family. [4Fe-4S] cluster is required as a cofactor.

It is found in the cytoplasm. It catalyses the reaction [[Fe-S] cluster scaffold protein carrying a second [4Fe-4S](2+) cluster] + N(6)-octanoyl-L-lysyl-[protein] + 2 oxidized [2Fe-2S]-[ferredoxin] + 2 S-adenosyl-L-methionine + 4 H(+) = [[Fe-S] cluster scaffold protein] + N(6)-[(R)-dihydrolipoyl]-L-lysyl-[protein] + 4 Fe(3+) + 2 hydrogen sulfide + 2 5'-deoxyadenosine + 2 L-methionine + 2 reduced [2Fe-2S]-[ferredoxin]. It participates in protein modification; protein lipoylation via endogenous pathway; protein N(6)-(lipoyl)lysine from octanoyl-[acyl-carrier-protein]: step 2/2. Functionally, catalyzes the radical-mediated insertion of two sulfur atoms into the C-6 and C-8 positions of the octanoyl moiety bound to the lipoyl domains of lipoate-dependent enzymes, thereby converting the octanoylated domains into lipoylated derivatives. This chain is Lipoyl synthase, found in Sinorhizobium medicae (strain WSM419) (Ensifer medicae).